We begin with the raw amino-acid sequence, 215 residues long: Adenylate kinase (215 aa).

An ATP-binding site is contributed by 10–15 (GAGKGT). Residues 30–59 (STGDIFRKNISENTPLGMEARSYMDKGLLV) form an NMP region. AMP contacts are provided by residues Thr-31, Arg-36, 57 to 59 (LLV), 85 to 88 (GFPR), and Gln-92. Residues 126-163 (GRRVCTSCGGSFHIKFNPPTIDGKCNLCGSDIVQRKDD) are LID. Arg-127 is a binding site for ATP. Zn(2+) contacts are provided by Cys-130 and Cys-133. 136 to 137 (SF) serves as a coordination point for ATP. Residues Cys-150 and Cys-153 each coordinate Zn(2+). AMP is bound by residues Arg-160 and Arg-171. Lys-199 is a binding site for ATP.

It belongs to the adenylate kinase family. In terms of assembly, monomer.

The protein resides in the cytoplasm. It catalyses the reaction AMP + ATP = 2 ADP. The protein operates within purine metabolism; AMP biosynthesis via salvage pathway; AMP from ADP: step 1/1. Catalyzes the reversible transfer of the terminal phosphate group between ATP and AMP. Plays an important role in cellular energy homeostasis and in adenine nucleotide metabolism. This chain is Adenylate kinase, found in Clostridium botulinum (strain Eklund 17B / Type B).